We begin with the raw amino-acid sequence, 61 residues long: Photosystem II reaction center protein K (61 aa).

A propeptide spanning residues 1-24 is cleaved from the precursor; sequence MLNIFNLICICFNSALFSSTFLVA. The chain crosses the membrane as a helical span at residues 40–60; sequence MPVIPLFFLLLAFVWQAAVSF.

It belongs to the PsbK family. As to quaternary structure, PSII is composed of 1 copy each of membrane proteins PsbA, PsbB, PsbC, PsbD, PsbE, PsbF, PsbH, PsbI, PsbJ, PsbK, PsbL, PsbM, PsbT, PsbX, PsbY, PsbZ, Psb30/Ycf12, at least 3 peripheral proteins of the oxygen-evolving complex and a large number of cofactors. It forms dimeric complexes.

The protein localises to the plastid. The protein resides in the chloroplast thylakoid membrane. Functionally, one of the components of the core complex of photosystem II (PSII). PSII is a light-driven water:plastoquinone oxidoreductase that uses light energy to abstract electrons from H(2)O, generating O(2) and a proton gradient subsequently used for ATP formation. It consists of a core antenna complex that captures photons, and an electron transfer chain that converts photonic excitation into a charge separation. This chain is Photosystem II reaction center protein K, found in Sinapis alba (White mustard).